The primary structure comprises 348 residues: Protein pelota homolog (348 aa).

It belongs to the eukaryotic release factor 1 family. Pelota subfamily. Monomer. The cofactor is a divalent metal cation.

The protein resides in the cytoplasm. May function in recognizing stalled ribosomes, interact with stem-loop structures in stalled mRNA molecules, and effect endonucleolytic cleavage of the mRNA. May play a role in the release non-functional ribosomes and degradation of damaged mRNAs. Has endoribonuclease activity. This is Protein pelota homolog from Methanococcus maripaludis (strain C7 / ATCC BAA-1331).